A 387-amino-acid chain; its full sequence is Guanylate kinase 1 (387 aa).

The region spanning 137–319 (EKPIVISGPS…CYKKLKNLLG (183 aa)) is the Guanylate kinase-like domain. ATP is bound at residue 144–151 (GPSGVGKG). Active-site residues include Arg177, Arg270, and Arg281. Asn304 and Asp305 together coordinate ATP.

The protein belongs to the guanylate kinase family. Monomer.

It catalyses the reaction GMP + ATP = GDP + ADP. Its function is as follows. Essential for recycling GMP and indirectly, cGMP. Required for normal development of the gametophyte and embryo, in association with GK2. This chain is Guanylate kinase 1 (GK-1), found in Arabidopsis thaliana (Mouse-ear cress).